Reading from the N-terminus, the 120-residue chain is Large ribosomal subunit protein bL17 (120 aa).

Belongs to the bacterial ribosomal protein bL17 family. Part of the 50S ribosomal subunit. Contacts protein L32.

In Mesomycoplasma hyopneumoniae (strain 232) (Mycoplasma hyopneumoniae), this protein is Large ribosomal subunit protein bL17.